The primary structure comprises 285 residues: 4-diphosphocytidyl-2-C-methyl-D-erythritol kinase (285 aa).

Lysine 9 is a catalytic residue. An ATP-binding site is contributed by 89-99 (PLGAGLGGGSS). Aspartate 131 is a catalytic residue.

Belongs to the GHMP kinase family. IspE subfamily.

It catalyses the reaction 4-CDP-2-C-methyl-D-erythritol + ATP = 4-CDP-2-C-methyl-D-erythritol 2-phosphate + ADP + H(+). Its pathway is isoprenoid biosynthesis; isopentenyl diphosphate biosynthesis via DXP pathway; isopentenyl diphosphate from 1-deoxy-D-xylulose 5-phosphate: step 3/6. Functionally, catalyzes the phosphorylation of the position 2 hydroxy group of 4-diphosphocytidyl-2C-methyl-D-erythritol. This chain is 4-diphosphocytidyl-2-C-methyl-D-erythritol kinase, found in Thermodesulfovibrio yellowstonii (strain ATCC 51303 / DSM 11347 / YP87).